Here is a 328-residue protein sequence, read N- to C-terminus: GMP reductase (328 aa).

Cys176 (thioimidate intermediate) is an active-site residue. NADP(+) is bound at residue 205–228; the sequence is IIADGGIRTHGDIAKSIRFGASMI.

The protein belongs to the IMPDH/GMPR family. GuaC type 2 subfamily.

It catalyses the reaction IMP + NH4(+) + NADP(+) = GMP + NADPH + 2 H(+). Catalyzes the irreversible NADPH-dependent deamination of GMP to IMP. It functions in the conversion of nucleobase, nucleoside and nucleotide derivatives of G to A nucleotides, and in maintaining the intracellular balance of A and G nucleotides. The protein is GMP reductase of Streptococcus pneumoniae (strain P1031).